The following is a 756-amino-acid chain: Conserved oligomeric Golgi complex subunit 2 (756 aa).

A coiled-coil region spans residues 62-82 (RSELRSHLASLNRELVDLINR). Residues 173 to 199 (WQNEDANSMGRSSMNDENSTQQDGTTM) form a disordered region.

It belongs to the COG2 family. Homodimer. Component of the conserved oligomeric Golgi complex which is composed of eight different subunits and is required for normal Golgi morphology and localization. Binds to COG3 and COG4. Interacts with FPP3/VETH1 and FPP2/VETH2; this interaction promotes the association between cortical microtubules and EXO70A1. Binds to SEC15B, and, possibly, with EXO70A1, SEC3A and SEC10A.

Its subcellular location is the golgi apparatus membrane. Its function is as follows. Required for normal Golgi morphology and function. Ensures, when in complex with FPP3/VETH1 and FPP2/VETH2, the correct secondary cell wall (SCW) deposition pattern by recruiting exocyst components to cortical microtubules in xylem cells during secondary cell wall deposition. In Arabidopsis thaliana (Mouse-ear cress), this protein is Conserved oligomeric Golgi complex subunit 2.